A 147-amino-acid chain; its full sequence is Thyrotropin subunit beta (147 aa).

The N-terminal stretch at 1–20 (MRVVLLASGVLCLLAGQVLS) is a signal peptide. Cystine bridges form between cysteine 22–cysteine 72, cysteine 36–cysteine 87, cysteine 39–cysteine 126, cysteine 47–cysteine 103, cysteine 51–cysteine 105, and cysteine 108–cysteine 115. Asparagine 43 carries an N-linked (GlcNAc...) asparagine glycan.

It belongs to the glycoprotein hormones subunit beta family. Heterodimer of a common alpha chain and a unique beta chain which confers biological specificity to thyrotropin, lutropin, follitropin and gonadotropin.

It is found in the secreted. Its function is as follows. Indispensable for the control of thyroid structure and metabolism. May play some role in the biological processes of the immature fishes. The polypeptide is Thyrotropin subunit beta (tshb) (Anguilla japonica (Japanese eel)).